A 119-amino-acid chain; its full sequence is Large ribosomal subunit protein uL18 (119 aa).

The protein belongs to the universal ribosomal protein uL18 family. Part of the 50S ribosomal subunit; part of the 5S rRNA/L5/L18/L25 subcomplex. Contacts the 5S and 23S rRNAs.

Its function is as follows. This is one of the proteins that bind and probably mediate the attachment of the 5S RNA into the large ribosomal subunit, where it forms part of the central protuberance. The protein is Large ribosomal subunit protein uL18 of Clostridium botulinum (strain ATCC 19397 / Type A).